The chain runs to 26 residues: uncharacterized protein (26 aa).

This is an uncharacterized protein from Saccharomyces cerevisiae (strain ATCC 204508 / S288c) (Baker's yeast).